Here is a 507-residue protein sequence, read N- to C-terminus: AMSH-like ubiquitin thioesterase 3 (507 aa).

A coiled-coil region spans residues 73 to 107 (QERLGSRKRLRAVINELESLKPEFNQLVDKLNRVE). 2 disordered regions span residues 133 to 162 (HKAS…LTSS) and 214 to 242 (PSNT…LNGD). Composition is skewed to polar residues over residues 146–162 (LPTS…LTSS), 214–224 (PSNTDWGSADN), and 232–242 (PSSSSASLNGD). The 131-residue stretch at 333 to 463 (LHVPVRIMDD…IFHLSDPSGV (131 aa)) folds into the MPN domain. Zn(2+) is bound by residues H411, H413, D424, H426, C469, H475, and H477. The JAMM motif motif lies at 411–424 (HTHPTQTCFMSSVD).

Belongs to the peptidase M67C family. Interacts with PATL1 and PATL2. May also bind to HSC70-1, HSC70-3, VHA-A, BGLU23 and EPSIN1. Interacts with BRO1/ALIX. Zn(2+) is required as a cofactor.

The protein localises to the membrane. Its subcellular location is the cytoplasm. The protein resides in the vacuole membrane. It localises to the late endosome. Its function is as follows. Zinc metalloprotease that cleaves 'Lys-48'- and 'Lys-63'-linked polyubiquitin chains, but is not implicated in protein degradation by the 26S proteasome, deneddylation, or desumoylation. Required for intracellular trafficking (e.g. trafficking from the Golgi to the vacuole and the vacuolar trafficking of endocytosed cargo), endocytosis and vacuole biogenesis. This is AMSH-like ubiquitin thioesterase 3 (AMSH3) from Arabidopsis thaliana (Mouse-ear cress).